Consider the following 223-residue polypeptide: Histone H1.5 (223 aa).

Residues 1 to 14 are compositionally biased toward low complexity; the sequence is MSETAPAETAAPAP. Residues 1-56 form a disordered region; it reads MSETAPAETAAPAPVEKSPAKKKTTKKAGAAKRKATGPPVSELITKAVSASKERGG. Serine 2 carries the post-translational modification N-acetylserine. A Phosphoserine modification is found at serine 2. Lysine 17 is subject to N6-acetyllysine. Serine 18 carries the phosphoserine modification. Basic residues predominate over residues 20–35; sequence AKKKTTKKAGAAKRKA. Lysine 27 is subject to N6-methyllysine. Residue lysine 34 is modified to N6-(beta-hydroxybutyryl)lysine; alternate. At lysine 34 the chain carries N6-succinyllysine; alternate. Threonine 36 is subject to Phosphothreonine. The 74-residue stretch at 36 to 109 folds into the H15 domain; it reads TGPPVSELIT…GASGSFKLNK (74 aa). Residue lysine 46 is modified to N6-acetyllysine. Lysine 52 carries the N6-(beta-hydroxybutyryl)lysine modification. Citrulline is present on arginine 54. An N6-(beta-hydroxybutyryl)lysine modification is found at lysine 64. N6-acetyllysine is present on lysine 75. 3 positions are modified to N6-(beta-hydroxybutyryl)lysine: lysine 85, lysine 90, and lysine 106. Positions 91–223 are disordered; sequence GTLVQTKGTG…KAKKAVSKKK (133 aa). Residues 119 to 130 show a composition bias toward basic residues; sequence KAKKTGAAKAKK. 2 positions are modified to phosphothreonine: threonine 135 and threonine 152. Over residues 137–158 the composition is skewed to basic residues; sequence KKPKKTAGAKKTVKKTPKKAKK. Lysine 165 carries the post-translational modification N6-acetyllysine. Positions 166–184 are enriched in basic residues; it reads KVAKSPKKAKAAAKPKKAA. Serine 170 and serine 186 each carry phosphoserine. Residues 191 to 223 are compositionally biased toward basic residues; that stretch reads KAVKSKASKPKVTKPKTAKPKAAKAKKAVSKKK.

Belongs to the histone H1/H5 family. In terms of assembly, interacts with MSX1. H1 histones are progressively phosphorylated during the cell cycle, becoming maximally phosphorylated during late G2 phase and M phase, and being dephosphorylated sharply thereafter. In terms of processing, citrullination at Arg-54 (H1R54ci) by PADI4 takes place within the DNA-binding site of H1 and results in its displacement from chromatin and global chromatin decondensation, thereby promoting pluripotency and stem cell maintenance. Post-translationally, hydroxybutyrylation of histones is induced by starvation.

Its subcellular location is the nucleus. It is found in the chromosome. In terms of biological role, histone H1 protein binds to linker DNA between nucleosomes forming the macromolecular structure known as the chromatin fiber. Histones H1 are necessary for the condensation of nucleosome chains into higher-order structured fibers. Also acts as a regulator of individual gene transcription through chromatin remodeling, nucleosome spacing and DNA methylation. The protein is Histone H1.5 (H1-5) of Mus musculus (Mouse).